A 445-amino-acid chain; its full sequence is Ubiquitin carboxyl-terminal hydrolase 11 (445 aa).

The 412-residue stretch at 1 to 412 (NSARADLCVA…AAYVLFYQRQ (412 aa)) folds into the USP domain. The disordered stretch occupies residues 127–194 (RPSSDDEDDG…GPSHWPQRAR (68 aa)). Position 130 is a phosphoserine (Ser130). Over residues 131-140 (DDEDDGDEKD) the composition is skewed to acidic residues. His362 serves as the catalytic Nucleophile. Residue His370 is the Proton acceptor of the active site. Residues 416–445 (RRLQPQPSSSDPPASPACGSPPNSEFMDVN) form a disordered region. The span at 420–439 (PQPSSSDPPASPACGSPPNS) shows a compositional bias: low complexity. A Phosphoserine modification is found at Ser430.

It belongs to the peptidase C19 family. In terms of assembly, monomer. Interacts with RANBP9/RANBPM. Interacts with BRCA2. Interacts with CHUK/IKKA. Interacts with NFKBIA. Associated component of the Polycomb group (PcG) multiprotein PRC1-like complex.

It localises to the nucleus. The protein resides in the cytoplasm. Its subcellular location is the chromosome. It catalyses the reaction Thiol-dependent hydrolysis of ester, thioester, amide, peptide and isopeptide bonds formed by the C-terminal Gly of ubiquitin (a 76-residue protein attached to proteins as an intracellular targeting signal).. Functionally, protease that can remove conjugated ubiquitin from target proteins and polyubiquitin chains. Inhibits the degradation of target proteins by the proteasome. Cleaves preferentially 'Lys-6' and 'Lys-63'-linked ubiquitin chains. Has lower activity with 'Lys-11' and 'Lys-33'-linked ubiquitin chains, and extremely low activity with 'Lys-27', 'Lys-29' and 'Lys-48'-linked ubiquitin chains (in vitro). Plays a role in the regulation of pathways leading to NF-kappa-B activation. Plays a role in the regulation of DNA repair after double-stranded DNA breaks. Acts as a chromatin regulator via its association with the Polycomb group (PcG) multiprotein PRC1-like complex; may act by deubiquitinating components of the PRC1-like complex. Promotes cell proliferation by deubiquitinating phosphorylated E2F1. The chain is Ubiquitin carboxyl-terminal hydrolase 11 (USP11) from Canis lupus familiaris (Dog).